Here is a 728-residue protein sequence, read N- to C-terminus: Glycine--tRNA ligase (728 aa).

The N-terminal 32 residues, 1–32 (MPCLLPTLLRATRAALLLQSPRVVAAPASQRL), are a transit peptide targeting the mitochondrion. One can recognise a WHEP-TRS domain in the interval 52–108 (LLAPLRLAVRQQGDFVRKLKEDKAPQVDVDRAVAELKARKRVLEAKELALQPKDDIV). K193 carries the N6-acetyllysine modification. A glycine-binding site is contributed by E288. Residues 320–322 (RNE) and 331–332 (RV) each bind ATP. Residue E339 participates in glycine binding. Y442 carries the phosphotyrosine modification. Residue 446–447 (EI) coordinates ATP. Position 490 is an N6-acetyllysine (K490). 565–567 (EPS) contributes to the glycine binding site. R572 lines the ATP pocket. The residue at position 689 (S689) is a Phosphoserine. T725 is modified (phosphothreonine).

The protein belongs to the class-II aminoacyl-tRNA synthetase family. Homodimer.

Its subcellular location is the cytoplasm. It is found in the mitochondrion. It localises to the cell projection. The protein resides in the axon. The protein localises to the secreted. Its subcellular location is the extracellular exosome. The catalysed reaction is tRNA(Gly) + glycine + ATP = glycyl-tRNA(Gly) + AMP + diphosphate. It catalyses the reaction 2 ATP + H(+) = P(1),P(4)-bis(5'-adenosyl) tetraphosphate + diphosphate. Its function is as follows. Catalyzes the ATP-dependent ligation of glycine to the 3'-end of its cognate tRNA, via the formation of an aminoacyl-adenylate intermediate (Gly-AMP). Also produces diadenosine tetraphosphate (Ap4A), a universal pleiotropic signaling molecule needed for cell regulation pathways, by direct condensation of 2 ATPs. Thereby, may play a special role in Ap4A homeostasis. In Rattus norvegicus (Rat), this protein is Glycine--tRNA ligase (Gars1).